Here is a 374-residue protein sequence, read N- to C-terminus: Histidinol-phosphate aminotransferase 1 (374 aa).

An N6-(pyridoxal phosphate)lysine modification is found at Lys-232.

This sequence belongs to the class-II pyridoxal-phosphate-dependent aminotransferase family. Histidinol-phosphate aminotransferase subfamily. Homodimer. The cofactor is pyridoxal 5'-phosphate.

It catalyses the reaction L-histidinol phosphate + 2-oxoglutarate = 3-(imidazol-4-yl)-2-oxopropyl phosphate + L-glutamate. The protein operates within amino-acid biosynthesis; L-histidine biosynthesis; L-histidine from 5-phospho-alpha-D-ribose 1-diphosphate: step 7/9. This Ralstonia nicotianae (strain ATCC BAA-1114 / GMI1000) (Ralstonia solanacearum) protein is Histidinol-phosphate aminotransferase 1 (hisC1).